A 449-amino-acid chain; its full sequence is Na(+)-translocating NADH-quinone reductase subunit A (449 aa).

The protein belongs to the NqrA family. As to quaternary structure, composed of six subunits; NqrA, NqrB, NqrC, NqrD, NqrE and NqrF.

The catalysed reaction is a ubiquinone + n Na(+)(in) + NADH + H(+) = a ubiquinol + n Na(+)(out) + NAD(+). Functionally, NQR complex catalyzes the reduction of ubiquinone-1 to ubiquinol by two successive reactions, coupled with the transport of Na(+) ions from the cytoplasm to the periplasm. NqrA to NqrE are probably involved in the second step, the conversion of ubisemiquinone to ubiquinol. The polypeptide is Na(+)-translocating NADH-quinone reductase subunit A (Serratia proteamaculans (strain 568)).